The sequence spans 239 residues: Large ribosomal subunit protein uL2 (239 aa).

Residues 200-239 (VNHPHGGKEHHIGRPSTVSRRAPPGRKVGHIAARRTGRRK) are disordered. Residues 222-239 (PPGRKVGHIAARRTGRRK) are compositionally biased toward basic residues.

The protein belongs to the universal ribosomal protein uL2 family. Part of the 50S ribosomal subunit. Forms a bridge to the 30S subunit in the 70S ribosome.

In terms of biological role, one of the primary rRNA binding proteins. Required for association of the 30S and 50S subunits to form the 70S ribosome, for tRNA binding and peptide bond formation. It has been suggested to have peptidyltransferase activity; this is somewhat controversial. Makes several contacts with the 16S rRNA in the 70S ribosome. The chain is Large ribosomal subunit protein uL2 from Thermococcus gammatolerans (strain DSM 15229 / JCM 11827 / EJ3).